We begin with the raw amino-acid sequence, 166 residues long: Protein UL5 (166 aa).

Belongs to the RL11 family. As to quaternary structure, interacts with host IQGAP1.

The protein resides in the host cytoplasm. In terms of biological role, may play a role in rearrangement of cellular cytoskeleton towards an efficient viral assembly and spreading. The chain is Protein UL5 (UL5) from Human cytomegalovirus (strain AD169) (HHV-5).